Reading from the N-terminus, the 144-residue chain is Putative HTH-type transcriptional regulator aq_268 (144 aa).

Positions Ile2 to Asn133 constitute an HTH rrf2-type domain.

The polypeptide is Putative HTH-type transcriptional regulator aq_268 (Aquifex aeolicus (strain VF5)).